Reading from the N-terminus, the 338-residue chain is MVVMAPRTLFLLLSGALTLTETWAGSHSMRYFSAAVSRPGRGEPRFIAMGYVDDTQFVRFDSDSACPRMEPRAPWVEQEGPEYWEEETRNTKAHAQTDRMNLQTLRGYYNQSEASSHTLQWMIGCDLGSDGRLLRGYEQYAYDGKDYLALNEDLRSWTAADTAAQISKRKCEAANVAEQRRAYLEGTCVEWLHRYLENGKEMLQRADPPKTHVTHHPVFDYEATLRCWALGFYPAEIILTWQRDGEDQTQDVELVETRPAGDGTFQKWAAVVVPSGEEQRYTCHVQHEGLPEPLMLRWKQSSLPTIPIMGIVAGLVVLAAVVTGAAVAAVLWRKKSSD.

The first 24 residues, 1 to 24 (MVVMAPRTLFLLLSGALTLTETWA), serve as a signal peptide directing secretion. The segment at 3-11 (VMAPRTLFL) is VL9 epitope. The alpha-1 stretch occupies residues 25–114 (GSHSMRYFSA…LRGYYNQSEA (90 aa)). Topologically, residues 25 to 308 (GSHSMRYFSA…KQSSLPTIPI (284 aa)) are extracellular. Residues Tyr-31, His-94, Asn-101, and Tyr-108 each contribute to the a peptide antigen site. Residue Asn-110 is glycosylated (N-linked (GlcNAc...) asparagine). An alpha-2 region spans residues 115–206 (SSHTLQWMIG…ENGKEMLQRA (92 aa)). A disulfide bridge links Cys-125 with Cys-188. 6 residues coordinate a peptide antigen: Ser-167, Lys-170, Gln-179, Arg-180, Tyr-183, and Tyr-195. The tract at residues 207-298 (DPPKTHVTHH…GLPEPLMLRW (92 aa)) is alpha-3. The Ig-like C1-type domain occupies 209 to 299 (PKTHVTHHPV…LPEPLMLRWK (91 aa)). Cysteines 227 and 283 form a disulfide. The connecting peptide stretch occupies residues 299–308 (KQSSLPTIPI). The helical transmembrane segment at 309–332 (MGIVAGLVVLAAVVTGAAVAAVLW) threads the bilayer. Over 333–338 (RKKSSD) the chain is Cytoplasmic. Residues 334 to 336 (KKS) carry the ER-retrieval signal motif.

Belongs to the MHC class I family. In terms of assembly, forms a heterotrimer with B2M and a self-peptide (peptide-bound HLA-G-B2M). HLA-G-B2M complex interacts with components of the antigen processing machinery TAPBP and TAP1-TAP2 complex; this interaction is required for loading of high affinity peptides and heterotrimer translocation to the cell surface. Interacts with CALCR; this interaction is required for appropriate folding. Interacts with COPB1; this interaction mediates the endoplasmic reticulum (ER) retrieval of HLA-G-B2M complexes that bind low affinity peptides. On the cell surface, peptide-bound HLA-G-B2M molecules (referred to as monomers) can form disulfide-linked homomultimers, homodimers and homotrimers. Interacts with KIR2DL4; this interaction is direct. Interacts with LILRB1 and LILRB2 receptors; this interaction is direct. Interacts with CD160; this interactions is direct. Interacts with CD8A homodimer; this interaction is direct and might down-regulate T cell receptor signaling. Isoform 2: Forms a non-disulfide-linked homodimer and interacts with LILRB2. In terms of processing, N-glycosylated. Produced by proteolytic cleavage at the cell surface (shedding) by matrix metalloproteinase MMP2. As to expression, expressed in adult eye. Expressed in immune cell subsets including monocytes, myeloid and plasmacytoid dendritic cells and regulatory T cells (Tr1)(at protein level). Secreted by follicular dendritic cell and follicular helper T cells. In terms of tissue distribution, detected in physiological fluids including amniotic fluid and serum. Expressed in placenta, amniotic membrane, skin, cord blood and peripheral blood mononuclear cells.

It is found in the cell membrane. Its subcellular location is the endoplasmic reticulum membrane. It localises to the early endosome membrane. The protein localises to the secreted. The protein resides in the early endosome. It is found in the cell projection. Its subcellular location is the filopodium membrane. Its function is as follows. Non-classical major histocompatibility class Ib molecule involved in immune regulatory processes at the maternal-fetal interface. In complex with B2M/beta-2 microglobulin binds a limited repertoire of nonamer self-peptides derived from intracellular proteins including histones and ribosomal proteins. Peptide-bound HLA-G-B2M complex acts as a ligand for inhibitory/activating KIR2DL4, LILRB1 and LILRB2 receptors on uterine immune cells to promote fetal development while maintaining maternal-fetal tolerance. Upon interaction with KIR2DL4 and LILRB1 receptors on decidual NK cells, it triggers NK cell senescence-associated secretory phenotype as a molecular switch to promote vascular remodeling and fetal growth in early pregnancy. Through interaction with KIR2DL4 receptor on decidual macrophages induces pro-inflammatory cytokine production mainly associated with tissue remodeling. Through interaction with LILRB2 receptor triggers differentiation of type 1 regulatory T cells and myeloid-derived suppressor cells, both of which actively maintain maternal-fetal tolerance. May play a role in balancing tolerance and antiviral-immunity at maternal-fetal interface by keeping in check the effector functions of NK, CD8+ T cells and B cells. Reprograms B cells toward an immune suppressive phenotype via LILRB1. May induce immune activation/suppression via intercellular membrane transfer (trogocytosis), likely enabling interaction with KIR2DL4, which resides mostly in endosomes. Through interaction with the inhibitory receptor CD160 on endothelial cells may control angiogenesis in immune privileged sites. Functionally, likely does not bind B2M and presents peptides. Negatively regulates NK cell- and CD8+ T cell-mediated cytotoxicity. In terms of biological role, non-classical major histocompatibility class Ib molecule involved in immune regulatory processes at the maternal-fetal interface. In complex with B2M/beta-2 microglobulin binds a limited repertoire of nonamer self-peptides derived from intracellular proteins including histones and ribosomal proteins. Peptide-bound HLA-G-B2M complex acts as a ligand for inhibitory/activating KIR2DL4, LILRB1 and LILRB2 receptors on uterine immune cells to promote fetal development while maintaining maternal-fetal tolerance. Upon interaction with KIR2DL4 and LILRB1 receptors on decidual NK cells, it triggers NK cell senescence-associated secretory phenotype as a molecular switch to promote vascular remodeling and fetal growth in early pregnancy. Through interaction with KIR2DL4 receptor on decidual macrophages induces pro-inflammatory cytokine production mainly associated with tissue remodeling. Through interaction with LILRB2 receptor triggers differentiation of type 1 regulatory T cells and myeloid-derived suppressor cells, both of which actively maintain maternal-fetal tolerance. Reprograms B cells toward an immune suppressive phenotype via LILRB1. Likely does not bind B2M and presents peptides. This chain is HLA class I histocompatibility antigen, alpha chain G, found in Homo sapiens (Human).